The chain runs to 479 residues: Ribosomal lysine N-methyltransferase 2 (479 aa).

One can recognise an SET domain in the interval 22–325 (PNISICESPE…INEELFLNYG (304 aa)). Position 324 (Tyr324) interacts with S-adenosyl-L-methionine.

It belongs to the class V-like SAM-binding methyltransferase superfamily. RKM2 family.

S-adenosyl-L-methionine-dependent protein-lysine N-methyltransferase that trimethylates 60S ribosomal protein L12 (RPL12A and RPL12B) at 'Lys-4' and 'Lys-11'. This Saccharomyces cerevisiae (strain ATCC 204508 / S288c) (Baker's yeast) protein is Ribosomal lysine N-methyltransferase 2.